Reading from the N-terminus, the 189-residue chain is Peptidyl-tRNA hydrolase (189 aa).

Residue Y16 participates in tRNA binding. H21 acts as the Proton acceptor in catalysis. 3 residues coordinate tRNA: F67, N69, and N115.

Belongs to the PTH family. Monomer.

Its subcellular location is the cytoplasm. It catalyses the reaction an N-acyl-L-alpha-aminoacyl-tRNA + H2O = an N-acyl-L-amino acid + a tRNA + H(+). In terms of biological role, hydrolyzes ribosome-free peptidyl-tRNAs (with 1 or more amino acids incorporated), which drop off the ribosome during protein synthesis, or as a result of ribosome stalling. Its function is as follows. Catalyzes the release of premature peptidyl moieties from peptidyl-tRNA molecules trapped in stalled 50S ribosomal subunits, and thus maintains levels of free tRNAs and 50S ribosomes. In Legionella pneumophila (strain Lens), this protein is Peptidyl-tRNA hydrolase.